A 432-amino-acid chain; its full sequence is MVTTALNTTKSEEIFSAAQKLMPGGVSSPVRAFKSVGGQPIVFDRVKGSRVWDVDGNEYIDYVGTWGPAICGHANDEVNAALRETLEKGTSFGAPCLKENILAEMVINAVPSIEMVRFVNSGTEACMSVLRLMRAFTGREKIIKFEGCYHGHADMFLVQAGSGVATLGLPDSPGVPKTTTAATLTAPYNDLEAVKKLFAENPGEIAGVILEPVVGNSGFVLPDAGFLEGLREITKEHDALLVFDEVMTGFRISYGGAQEKFGVTPDLTTLGKVIGGGLPVGAYGGRKDIMSMVAPAGPMYQAGTLSGNPLAMTAGIKTLELLQRPGMYGQLETITKKLIDGLLSIAREAGHEVTGGNISGMFGMFFTGEPVRNYEDAKKSDLHKFSRYHRGMLEQGIYLAPSQFEAGFTSLAHTDEDIEKTLAAAKVVLNNL.

The residue at position 272 (Lys-272) is an N6-(pyridoxal phosphate)lysine.

It belongs to the class-III pyridoxal-phosphate-dependent aminotransferase family. HemL subfamily. Homodimer. Requires pyridoxal 5'-phosphate as cofactor.

The protein resides in the cytoplasm. The enzyme catalyses (S)-4-amino-5-oxopentanoate = 5-aminolevulinate. The protein operates within porphyrin-containing compound metabolism; protoporphyrin-IX biosynthesis; 5-aminolevulinate from L-glutamyl-tRNA(Glu): step 2/2. It functions in the pathway porphyrin-containing compound metabolism; chlorophyll biosynthesis. This Picosynechococcus sp. (strain ATCC 27264 / PCC 7002 / PR-6) (Agmenellum quadruplicatum) protein is Glutamate-1-semialdehyde 2,1-aminomutase.